Here is a 1948-residue protein sequence, read N- to C-terminus: Receptor-type tyrosine-protein phosphatase S (1948 aa).

A signal peptide spans 1 to 29; sequence MAPTWGPGMVSVVGPMGLLVVLLVGGCAA. At 30 to 1282 the chain is on the extracellular side; it reads EEPPRFIKEP…PQPIVDGEEG (1253 aa). 3 consecutive Ig-like C2-type domains span residues 33–123, 135–233, and 245–327; these read PRFI…AKLT, PNID…ANLY, and PRFS…AQIT. Intrachain disulfides connect Cys54/Cys107 and Cys156/Cys216. The interval 68–72 is important for binding to glycosaminoglycan chains; it reads KKGKK. N-linked (GlcNAc...) asparagine glycosylation is found at Asn263 and Asn308. Cysteines 266 and 311 form a disulfide. 8 Fibronectin type-III domains span residues 334–424, 429–523, 527–616, 621–718, 723–831, 832–930, 931–1033, and 1036–1120; these read APGT…TGEQ, APRN…TQQG, QPMN…TLQS, PPQD…TDED, PPRK…TKGA, VLGR…TPRG, HPQI…FLRD, and SPKN…TAFN. The disordered stretch occupies residues 700–724; that stretch reads TEVGPGPESSPVVVRTDEDVPSAPP. The span at 701–713 shows a compositional bias: low complexity; sequence EVGPGPESSPVVV. Residue Asn733 is glycosylated (N-linked (GlcNAc...) asparagine). N-linked (GlcNAc...) asparagine glycosylation is present at Asn940. The chain crosses the membrane as a helical span at residues 1283–1303; sequence LIWVIGPVLAVVFIICIVIAI. Over 1304–1948 the chain is Cytoplasmic; it reads LLYKNKPDSK…YLGSFDHYAT (645 aa). 2 stretches are compositionally biased toward basic and acidic residues: residues 1311 to 1321 and 1331 to 1340; these read DSKRKDSEPRT and APHHPKDPVE. Residues 1311–1340 form a disordered region; the sequence is DSKRKDSEPRTKCLLNNADLAPHHPKDPVE. 2 consecutive Tyrosine-protein phosphatase domains span residues 1393-1648 and 1680-1939; these read LSQE…LLEA and MELE…ALEY. Substrate-binding positions include Asp1557, 1589 to 1595, and Gln1633; that span reads CSAGVGR. Residue Cys1589 is the Phosphocysteine intermediate of the active site. Cys1880 acts as the Phosphocysteine intermediate in catalysis.

This sequence belongs to the protein-tyrosine phosphatase family. Receptor class 2A subfamily. Binding to large heparan sulfate proteoglycan structures promotes oligomerization. Binding to chondroitin sulfate proteoglycan does not lead to oligomerization. Interacts (via Ig-like domains) with NTRK3. Interacts (via Ig-like domains) with NTRK1, but does not form detectable complexes with NTRK2. Interacts with PPFIA1, PPFIA2 and PPFIA3. In terms of processing, a cleavage occurs, separating the extracellular domain from the transmembrane segment. This process called 'ectodomain shedding' is thought to be involved in receptor desensitization, signal transduction and/or membrane localization. Detected in peripheral blood plasmacytoid dendritic cells (at protein level). Detected in all tissues tested except for placenta and liver. Detected in peripheral blood plasmacytoid dendritic cells.

The protein localises to the cell membrane. It is found in the cell projection. The protein resides in the axon. Its subcellular location is the perikaryon. It localises to the cytoplasmic vesicle. The protein localises to the secretory vesicle. It is found in the synaptic vesicle membrane. The protein resides in the synapse. Its subcellular location is the synaptosome. It localises to the postsynaptic density. The protein localises to the neuron projection. It is found in the growth cone. It catalyses the reaction O-phospho-L-tyrosyl-[protein] + H2O = L-tyrosyl-[protein] + phosphate. Cell surface receptor that binds to glycosaminoglycans, including chondroitin sulfate proteoglycans and heparan sulfate proteoglycan. Binding to chondroitin sulfate and heparan sulfate proteoglycans has opposite effects on PTPRS oligomerization and regulation of neurite outgrowth. Contributes to the inhibition of neurite and axonal outgrowth by chondroitin sulfate proteoglycans, also after nerve transection. Plays a role in stimulating neurite outgrowth in response to the heparan sulfate proteoglycan GPC2. Required for normal brain development, especially for normal development of the pituitary gland and the olfactory bulb. Functions as a tyrosine phosphatase. Mediates dephosphorylation of NTRK1, NTRK2 and NTRK3. Plays a role in down-regulation of signaling cascades that lead to the activation of Akt and MAP kinases. Down-regulates TLR9-mediated activation of NF-kappa-B, as well as production of TNF, interferon alpha and interferon beta. The protein is Receptor-type tyrosine-protein phosphatase S (PTPRS) of Homo sapiens (Human).